The primary structure comprises 144 residues: Small ribosomal subunit protein bS6 (144 aa).

A disordered region spans residues D97 to A144. Positions K105 to D124 are enriched in basic and acidic residues.

Belongs to the bacterial ribosomal protein bS6 family.

Functionally, binds together with bS18 to 16S ribosomal RNA. This Xanthomonas campestris pv. campestris (strain B100) protein is Small ribosomal subunit protein bS6.